The primary structure comprises 394 residues: MGIKGLTGLLSQHAPKAIQEHEIKTLFGRKVAIDASMSIYQFLIAVRQKDGELLTNDAGETTSHLMGLFYRTLRIVENGIKPAYIFDGKPPELKKGVLSKRLERREEAKEEGEEAKETGTVEDVDRFSRRTVKVTREHNEECRRLLRLMGIPVVIAPSEAEAQCAELARGGKVYAAGSEDMDTLTFNAPILFRHLTFSEAKKQPISEINLKEALEGLDMNMSQFIDLCILLGCDYLEPIKGVGPKSALKLIREYGGLKGVVKHLRENSGCRGMQIPDEWPWEEAKKIFEKPDVLPADEVELEWTNPDVDGLVQFLVKEKGFNEDRVRKGAEKLQKFLNSKQQGRLDGFFSVKPKEKAAAPAPVGKAKGKGKVDAKAKGTKRKVGFLNSMSGPLA.

The interval 1 to 105 is N-domain; the sequence is MGIKGLTGLL…GVLSKRLERR (105 aa). Residue Asp-34 participates in Mg(2+) binding. Residues Arg-47 and Arg-71 each coordinate DNA. Mg(2+) contacts are provided by Asp-87, Glu-159, Glu-161, Asp-180, and Asp-182. An I-domain region spans residues 123–254; the sequence is DVDRFSRRTV…KSALKLIREY (132 aa). Glu-159 is a DNA binding site. 2 residues coordinate DNA: Gly-232 and Asp-234. Asp-234 is a binding site for Mg(2+). The segment at 341 to 349 is interaction with PCNA; it reads QQGRLDGFF. The segment at 356–375 is disordered; it reads KAAAPAPVGKAKGKGKVDAK.

Belongs to the XPG/RAD2 endonuclease family. FEN1 subfamily. Interacts with PCNA. Three molecules of FEN1 bind to one PCNA trimer with each molecule binding to one PCNA monomer. PCNA stimulates the nuclease activity without altering cleavage specificity. It depends on Mg(2+) as a cofactor. In terms of processing, phosphorylated. Phosphorylation upon DNA damage induces relocalization to the nuclear plasma.

The protein localises to the nucleus. It is found in the nucleolus. Its subcellular location is the nucleoplasm. It localises to the mitochondrion. Functionally, structure-specific nuclease with 5'-flap endonuclease and 5'-3' exonuclease activities involved in DNA replication and repair. During DNA replication, cleaves the 5'-overhanging flap structure that is generated by displacement synthesis when DNA polymerase encounters the 5'-end of a downstream Okazaki fragment. It enters the flap from the 5'-end and then tracks to cleave the flap base, leaving a nick for ligation. Also involved in the long patch base excision repair (LP-BER) pathway, by cleaving within the apurinic/apyrimidinic (AP) site-terminated flap. Acts as a genome stabilization factor that prevents flaps from equilibrating into structures that lead to duplications and deletions. Also possesses 5'-3' exonuclease activity on nicked or gapped double-stranded DNA, and exhibits RNase H activity. Also involved in replication and repair of rDNA and in repairing mitochondrial DNA. This chain is Flap endonuclease 1-A, found in Laccaria bicolor (strain S238N-H82 / ATCC MYA-4686) (Bicoloured deceiver).